A 1939-amino-acid chain; its full sequence is Myosin-1 (1939 aa).

The Myosin N-terminal SH3-like domain maps to 33-82 (DAKTSVFVVDPKESFVKATVQSREGGKVTAKTEAGATVTVKDDQVFPMNP). Residues threonine 64 and threonine 69 each carry the phosphothreonine modification. Positions 86 to 782 (DKIEDMAMMT…LLGLLEEMRD (697 aa)) constitute a Myosin motor domain. Lysine 130 bears the N6,N6,N6-trimethyllysine mark. 179 to 186 (GESGAGKT) serves as a coordination point for ATP. Tyrosine 389 carries the phosphotyrosine modification. Threonine 419 carries the post-translational modification Phosphothreonine. The residue at position 424 (tyrosine 424) is a Phosphotyrosine. The interval 659–681 (LNKLMTNLRSTHPHFVRCIIPNE) is actin-binding. Histidine 757 carries the post-translational modification Pros-methylhistidine. Residues 761 to 775 (KFGHTKVFFKAGLLG) are actin-binding. Positions 785-814 (LAQLITRTQAMCRGFLARVEYQKMVERRES) constitute an IQ domain. The stretch at 843–1939 (LLKSAETEKE…EVHTKIISEE (1097 aa)) forms a coiled coil. Phosphoserine is present on residues serine 1092, serine 1096, serine 1162, and serine 1237. Threonine 1241 is modified (phosphothreonine). Serine 1243 and serine 1261 each carry phosphoserine. 2 positions are modified to phosphothreonine: threonine 1265 and threonine 1286. 4 positions are modified to phosphoserine: serine 1288, serine 1292, serine 1303, and serine 1306. Threonine 1467 bears the Phosphothreonine mark. At serine 1474 the chain carries Phosphoserine. Tyrosine 1492 is subject to Phosphotyrosine. A Phosphoserine modification is found at serine 1495. Threonine 1501 carries the phosphothreonine modification. A Phosphoserine modification is found at serine 1514. Residue threonine 1517 is modified to Phosphothreonine. Phosphoserine is present on residues serine 1542, serine 1554, serine 1574, serine 1600, serine 1603, serine 1714, and serine 1726. A phosphothreonine mark is found at threonine 1730 and threonine 1736. Serine 1739 is modified (phosphoserine).

The protein belongs to the TRAFAC class myosin-kinesin ATPase superfamily. Myosin family. Muscle myosin is a hexameric protein that consists of 2 heavy chain subunits (MHC), 2 alkali light chain subunits (MLC) and 2 regulatory light chain subunits (MLC-2). Interacts with SLC26A5.

It localises to the cytoplasm. The protein resides in the myofibril. Required for normal hearing. It plays a role in cochlear amplification of auditory stimuli, likely through the positive regulation of prestin (SLC26A5) activity and outer hair cell (OHC) electromotility. The protein is Myosin-1 of Homo sapiens (Human).